The following is a 134-amino-acid chain: Outer membrane lipoprotein RcsF (134 aa).

The N-terminal stretch at 1–15 (MRALPICLVALMLSG) is a signal peptide. Residue cysteine 16 is the site of N-palmitoyl cysteine attachment. Cysteine 16 is lipidated: S-diacylglycerol cysteine. 2 disordered regions span residues 22–48 (SPVE…RATP) and 67–88 (GEVS…IPTA). Residues 72 to 82 (DSCQASNQDSP) are compositionally biased toward polar residues. Disulfide bonds link cysteine 74–cysteine 118 and cysteine 109–cysteine 124.

The protein belongs to the RcsF family.

Its subcellular location is the cell outer membrane. Its function is as follows. Essential component of the Rcs signaling system, which controls transcription of numerous genes. Plays a role in signal transduction from the cell surface to the histidine kinase RcsC. May detect outer membrane defects. In Escherichia coli O6:H1 (strain CFT073 / ATCC 700928 / UPEC), this protein is Outer membrane lipoprotein RcsF.